Here is a 25-residue protein sequence, read N- to C-terminus: U11-ctenitoxin-Co1b (25 aa).

2 cysteine pairs are disulfide-bonded: C4-C18 and C11-C22.

As to quaternary structure, monomer. In terms of tissue distribution, expressed by the venom gland.

The protein localises to the secreted. In terms of biological role, neurotoxin. The sequence is that of U11-ctenitoxin-Co1b from Ctenus ornatus (Brazilian spider).